We begin with the raw amino-acid sequence, 168 residues long: Urease accessory protein UreE (168 aa).

The interval 145–168 (EGGAYAAGQGGGHGPHGQHTHPHH) is disordered.

It belongs to the UreE family.

The protein localises to the cytoplasm. Involved in urease metallocenter assembly. Binds nickel. Probably functions as a nickel donor during metallocenter assembly. This is Urease accessory protein UreE from Verminephrobacter eiseniae (strain EF01-2).